An 85-amino-acid polypeptide reads, in one-letter code: Protein RALF-like 28 (85 aa).

Residues 1-31 (MSILKETKRFMVVAMFIACVFISNNMNVAVA) form the signal peptide. 2 disulfide bridges follow: C48/C53 and C66/C72. The disordered stretch occupies residues 60–85 (NPYHRGCEKSKRCRGPDPPALPRKMI). Pro residues predominate over residues 75 to 85 (PDPPALPRKMI).

The protein belongs to the plant rapid alkalinization factor (RALF) family.

The protein resides in the secreted. In terms of biological role, cell signaling peptide that may regulate plant stress, growth, and development. Mediates a rapid alkalinization of extracellular space by mediating a transient increase in the cytoplasmic Ca(2+) concentration leading to a calcium-dependent signaling events through a cell surface receptor and a concomitant activation of some intracellular mitogen-activated protein kinases. This Arabidopsis thaliana (Mouse-ear cress) protein is Protein RALF-like 28 (RALFL28).